The chain runs to 2278 residues: Protein Ycf2 (2278 aa).

It belongs to the Ycf2 family.

It localises to the plastid. Its subcellular location is the chloroplast stroma. The protein resides in the chromoplast stroma. Functionally, probable ATPase of unknown function. Its presence in a non-photosynthetic plant (Epifagus virginiana) and experiments in tobacco indicate that it has an essential function which is probably not related to photosynthesis. This is Protein Ycf2 (ycf2-A) from Solanum lycopersicum (Tomato).